The following is a 359-amino-acid chain: GalNAc-alpha-(1-&gt;4)-GalNAc-alpha-(1-&gt;3)-diNAcBac-PP-undecaprenol alpha-1,4-N-acetyl-D-galactosaminyltransferase (359 aa).

Residue Glu-17 coordinates substrate. Tyr-45 lines the UDP-N-acetyl-alpha-D-galactosamine pocket. 71 to 74 (RFKK) contacts substrate. Residues His-117, Arg-190, Lys-195, Val-246, and 266–274 (EGLPTVLIE) contribute to the UDP-N-acetyl-alpha-D-galactosamine site. Residue Arg-190 participates in substrate binding.

It belongs to the glycosyltransferase group 1 family.

Its subcellular location is the cell inner membrane. It carries out the reaction N-acetyl-alpha-D-galactosaminyl-(1-&gt;4)-N-acetyl-alpha-D-galactosaminyl-(1-&gt;3)-N,N'-diacetyl-alpha-D-bacillosaminyl-tri-trans,heptacis-undecaprenyl diphosphate + 3 UDP-N-acetyl-alpha-D-galactosamine = [alpha-D-GalNAc-(1-&gt;4)]4-alpha-D-GalNAc-(1-&gt;3)-alpha-D-diNAcBac-tri-trans,hepta-cis-undecaprenyl diphosphate + 3 UDP + 3 H(+). The protein operates within protein modification; protein glycosylation. In terms of biological role, processive glycosyltransferase that is part of the biosynthetic pathway of the lipid-linked oligosaccharide (LLO) that serves as the glycan donor in bacterial protein N-glycosylation. Catalyzes the transfer of exactly three alpha-(1-&gt;4)-N-acetylgalactosamine (GalNAc) units to the growing LLO precursor, GalNAc-alpha-(1-&gt;4)-GalNAc-alpha-(1-&gt;3)-diNAcBac-PP-undecaprenyl. Cannot accept UDP-GlcNAc as substrate. The polypeptide is GalNAc-alpha-(1-&gt;4)-GalNAc-alpha-(1-&gt;3)-diNAcBac-PP-undecaprenol alpha-1,4-N-acetyl-D-galactosaminyltransferase (Campylobacter jejuni subsp. jejuni serotype O:2 (strain ATCC 700819 / NCTC 11168)).